Here is a 348-residue protein sequence, read N- to C-terminus: Glycerol-1-phosphate dehydrogenase [NAD(P)+] (348 aa).

Residues 94–98 (GKPID) and 116–119 (TAAS) each bind NAD(+). Residue Asp121 participates in substrate binding. Position 125 (Ser125) interacts with NAD(+). Asp168 provides a ligand contact to substrate. Zn(2+) is bound by residues Asp168 and His248. Residue His252 coordinates substrate. Position 264 (His264) interacts with Zn(2+).

The protein belongs to the glycerol-1-phosphate dehydrogenase family. Zn(2+) is required as a cofactor.

The protein localises to the cytoplasm. It catalyses the reaction sn-glycerol 1-phosphate + NAD(+) = dihydroxyacetone phosphate + NADH + H(+). It carries out the reaction sn-glycerol 1-phosphate + NADP(+) = dihydroxyacetone phosphate + NADPH + H(+). It participates in membrane lipid metabolism; glycerophospholipid metabolism. In terms of biological role, catalyzes the NAD(P)H-dependent reduction of dihydroxyacetonephosphate (DHAP or glycerone phosphate) to glycerol 1-phosphate (G1P). The G1P thus generated is used as the glycerophosphate backbone of phospholipids in the cellular membranes of Archaea. The polypeptide is Glycerol-1-phosphate dehydrogenase [NAD(P)+] (Haloquadratum walsbyi (strain DSM 16790 / HBSQ001)).